Here is a 251-residue protein sequence, read N- to C-terminus: tRNA (guanine-N(1)-)-methyltransferase (251 aa).

S-adenosyl-L-methionine-binding positions include Gly-117 and 137–142 (IGDYVL).

The protein belongs to the RNA methyltransferase TrmD family. As to quaternary structure, homodimer.

It localises to the cytoplasm. The catalysed reaction is guanosine(37) in tRNA + S-adenosyl-L-methionine = N(1)-methylguanosine(37) in tRNA + S-adenosyl-L-homocysteine + H(+). Its function is as follows. Specifically methylates guanosine-37 in various tRNAs. The sequence is that of tRNA (guanine-N(1)-)-methyltransferase from Haemophilus ducreyi (strain 35000HP / ATCC 700724).